Reading from the N-terminus, the 498-residue chain is ATP synthase subunit beta, chloroplastic (498 aa).

Residue 172–179 participates in ATP binding; the sequence is GGAGVGKT.

This sequence belongs to the ATPase alpha/beta chains family. As to quaternary structure, F-type ATPases have 2 components, CF(1) - the catalytic core - and CF(0) - the membrane proton channel. CF(1) has five subunits: alpha(3), beta(3), gamma(1), delta(1), epsilon(1). CF(0) has four main subunits: a(1), b(1), b'(1) and c(9-12).

It localises to the plastid. Its subcellular location is the chloroplast thylakoid membrane. It carries out the reaction ATP + H2O + 4 H(+)(in) = ADP + phosphate + 5 H(+)(out). Produces ATP from ADP in the presence of a proton gradient across the membrane. The catalytic sites are hosted primarily by the beta subunits. The protein is ATP synthase subunit beta, chloroplastic of Phalaenopsis aphrodite subsp. formosana (Moth orchid).